We begin with the raw amino-acid sequence, 396 residues long: Elongation factor Tu (396 aa).

The region spanning 10-206 (KPHVNVGTIG…ALDTYIPEPE (197 aa)) is the tr-type G domain. The G1 stretch occupies residues 19-26 (GHVDHGKT). 19–26 (GHVDHGKT) contacts GTP. Thr26 is a Mg(2+) binding site. Residues 60-64 (GITIN) form a G2 region. The tract at residues 81 to 84 (DCPG) is G3. GTP contacts are provided by residues 81–85 (DCPGH) and 136–139 (NKAD). The G4 stretch occupies residues 136 to 139 (NKAD). The G5 stretch occupies residues 174-176 (SAL).

This sequence belongs to the TRAFAC class translation factor GTPase superfamily. Classic translation factor GTPase family. EF-Tu/EF-1A subfamily. Monomer.

It is found in the cytoplasm. It carries out the reaction GTP + H2O = GDP + phosphate + H(+). Functionally, GTP hydrolase that promotes the GTP-dependent binding of aminoacyl-tRNA to the A-site of ribosomes during protein biosynthesis. In Thiobacillus denitrificans (strain ATCC 25259 / T1), this protein is Elongation factor Tu.